A 152-amino-acid chain; its full sequence is Transcriptional regulator MraZ (152 aa).

2 SpoVT-AbrB domains span residues 5–51 and 80–123; these read VNSI…PLPE and AAEC…DEVL.

The protein belongs to the MraZ family. As to quaternary structure, forms oligomers.

The protein localises to the cytoplasm. Its subcellular location is the nucleoid. This Methylococcus capsulatus (strain ATCC 33009 / NCIMB 11132 / Bath) protein is Transcriptional regulator MraZ.